Here is a 352-residue protein sequence, read N- to C-terminus: MSKTILVMAGGTGGHIFPALAVAHKLRDAGWRVVWLGNPEGMEARLVPQHGFEMVWIKFSALRGKGILRKLLLPVNLLRGFWQGLKAIRQVKPNVVLGMGGYITFPGGMMAALTGVPLVLHEQNSVAGLANRVLASVADRIVTGFPDVIKNGTWVGNPVRPEIAAIAAPAERFAERTGALRLLVIGGSLGAQVLNEMVPQAMALLGESDQPQIVHQAGEKHIEALKANYAAVGVQAHCVSFVEDMAGAYEWADLVICRAGALTIAELAAAGVASILVPFPHAVDDHQTGNAKFLVHAGGAFLLPQTELTPDAIALIRNYSRSQLLEMAEKARSLAKPDATEAVAQICSEIAK.

Residues 12 to 14 (TGG), N124, R160, S188, and Q287 contribute to the UDP-N-acetyl-alpha-D-glucosamine site.

It belongs to the glycosyltransferase 28 family. MurG subfamily.

It is found in the cell inner membrane. It catalyses the reaction di-trans,octa-cis-undecaprenyl diphospho-N-acetyl-alpha-D-muramoyl-L-alanyl-D-glutamyl-meso-2,6-diaminopimeloyl-D-alanyl-D-alanine + UDP-N-acetyl-alpha-D-glucosamine = di-trans,octa-cis-undecaprenyl diphospho-[N-acetyl-alpha-D-glucosaminyl-(1-&gt;4)]-N-acetyl-alpha-D-muramoyl-L-alanyl-D-glutamyl-meso-2,6-diaminopimeloyl-D-alanyl-D-alanine + UDP + H(+). It participates in cell wall biogenesis; peptidoglycan biosynthesis. In terms of biological role, cell wall formation. Catalyzes the transfer of a GlcNAc subunit on undecaprenyl-pyrophosphoryl-MurNAc-pentapeptide (lipid intermediate I) to form undecaprenyl-pyrophosphoryl-MurNAc-(pentapeptide)GlcNAc (lipid intermediate II). This chain is UDP-N-acetylglucosamine--N-acetylmuramyl-(pentapeptide) pyrophosphoryl-undecaprenol N-acetylglucosamine transferase, found in Dechloromonas aromatica (strain RCB).